Consider the following 235-residue polypeptide: Orotidine 5'-phosphate decarboxylase (235 aa).

Substrate-binding positions include D10, K33, D60 to T69, T123, R185, Q194, G214, and R215. K62 (proton donor) is an active-site residue.

Belongs to the OMP decarboxylase family. Type 1 subfamily. In terms of assembly, homodimer.

It carries out the reaction orotidine 5'-phosphate + H(+) = UMP + CO2. Its pathway is pyrimidine metabolism; UMP biosynthesis via de novo pathway; UMP from orotate: step 2/2. Its function is as follows. Catalyzes the decarboxylation of orotidine 5'-monophosphate (OMP) to uridine 5'-monophosphate (UMP). This Lactobacillus johnsonii (strain CNCM I-12250 / La1 / NCC 533) protein is Orotidine 5'-phosphate decarboxylase.